A 358-amino-acid chain; its full sequence is Peptide chain release factor 1 (358 aa).

Residue Gln237 is modified to N5-methylglutamine.

Belongs to the prokaryotic/mitochondrial release factor family. Post-translationally, methylated by PrmC. Methylation increases the termination efficiency of RF1.

The protein resides in the cytoplasm. Functionally, peptide chain release factor 1 directs the termination of translation in response to the peptide chain termination codons UAG and UAA. This chain is Peptide chain release factor 1, found in Streptomyces coelicolor (strain ATCC BAA-471 / A3(2) / M145).